The primary structure comprises 424 residues: Protein ORF114 (424 aa).

It localises to the host cytoplasm. In terms of biological role, plays a role in per os infectivity in vivo. Facilitates embedding of occlusion-derived viruses (ODVs) into occlusion bodies (OBs). The polypeptide is Protein ORF114 (Lepidoptera (butterflies and moths)).